Reading from the N-terminus, the 305-residue chain is UDP-N-acetylenolpyruvoylglucosamine reductase (305 aa).

The region spanning 33 to 198 (RVGGPAQVLF…TGGTFRGRRA (166 aa)) is the FAD-binding PCMH-type domain. Residue arginine 178 is part of the active site. Residue serine 227 is the Proton donor of the active site. The active site involves glutamate 297.

Belongs to the MurB family. FAD serves as cofactor.

It localises to the cytoplasm. It carries out the reaction UDP-N-acetyl-alpha-D-muramate + NADP(+) = UDP-N-acetyl-3-O-(1-carboxyvinyl)-alpha-D-glucosamine + NADPH + H(+). Its pathway is cell wall biogenesis; peptidoglycan biosynthesis. Its function is as follows. Cell wall formation. In Nitrobacter hamburgensis (strain DSM 10229 / NCIMB 13809 / X14), this protein is UDP-N-acetylenolpyruvoylglucosamine reductase.